The following is a 259-amino-acid chain: Probable iron export permease protein FetB (259 aa).

Residues 1 to 5 (MNSHN) are Periplasmic-facing. Residues 6–26 (ITNESLALALMLVVVAILISH) traverse the membrane as a helical segment. At 27-35 (KEKLALEKD) the chain is on the cytoplasmic side. 2 helical membrane-spanning segments follow: residues 36 to 56 (ILWS…VLKY) and 57 to 77 (IFSV…CFNA). Over 78-91 (AWNAQKRSKYIAKA) the chain is Cytoplasmic. The helical transmembrane segment at 92–112 (FISSFIAITVGAGITLAVLIL) threads the bilayer. The Periplasmic portion of the chain corresponds to 113 to 117 (SGSIE). A helical transmembrane segment spans residues 118–138 (FIPMQVIPIAGMIAGNAMVAV). Topologically, residues 139-191 (GLCYNNLGQRVISEQQQIQEKLSLGATPKQASAILIRDSIRAALIPTVDSAKT) are cytoplasmic. A helical transmembrane segment spans residues 192–212 (VGLVSLPGMMSGLIFAGIDPV). At 213–218 (KAIKYQ) the chain is on the periplasmic side. Residues 219–239 (IMVTFMLLSTASLSTIIACYL) traverse the membrane as a helical segment. The Cytoplasmic portion of the chain corresponds to 240–259 (TYRKFYNSRHQLVVTQLKKK).

The protein belongs to the UPF0014 family. In terms of assembly, the complex is composed of two ATP-binding proteins (FetA) and two transmembrane proteins (FetB).

It localises to the cell inner membrane. Functionally, part of the ABC transporter complex FetAB, which is probably involved in iron export and enhances resistance to H(2)O(2)-mediated oxidative stress. Probably responsible for the translocation of the substrate across the membrane. This chain is Probable iron export permease protein FetB (fetB), found in Escherichia coli (strain K12).